Here is a 471-residue protein sequence, read N- to C-terminus: Serine hydroxymethyltransferase, cytosolic (471 aa).

The residue at position 249 (Lys-249) is an N6-(pyridoxal phosphate)lysine.

It belongs to the SHMT family. Requires pyridoxal 5'-phosphate as cofactor.

The protein localises to the cytoplasm. Its subcellular location is the cytosol. It catalyses the reaction (6R)-5,10-methylene-5,6,7,8-tetrahydrofolate + glycine + H2O = (6S)-5,6,7,8-tetrahydrofolate + L-serine. The protein operates within one-carbon metabolism; tetrahydrofolate interconversion. Catalyzes the interconversion of serine and glycine. Essential for viability and required for virulence in a murine model of established pulmonary infection. The sequence is that of Serine hydroxymethyltransferase, cytosolic from Aspergillus fumigatus (strain ATCC MYA-4609 / CBS 101355 / FGSC A1100 / Af293) (Neosartorya fumigata).